The chain runs to 302 residues: Aspartate carbamoyltransferase catalytic subunit (302 aa).

Residues Arg-53 and Thr-54 each coordinate carbamoyl phosphate. Lys-82 is an L-aspartate binding site. The carbamoyl phosphate site is built by Arg-103, His-131, and Gln-134. L-aspartate-binding residues include Arg-164 and Arg-223. Carbamoyl phosphate is bound by residues Leu-260 and Pro-261.

This sequence belongs to the aspartate/ornithine carbamoyltransferase superfamily. ATCase family. In terms of assembly, heterooligomer of catalytic and regulatory chains.

It carries out the reaction carbamoyl phosphate + L-aspartate = N-carbamoyl-L-aspartate + phosphate + H(+). It functions in the pathway pyrimidine metabolism; UMP biosynthesis via de novo pathway; (S)-dihydroorotate from bicarbonate: step 2/3. Functionally, catalyzes the condensation of carbamoyl phosphate and aspartate to form carbamoyl aspartate and inorganic phosphate, the committed step in the de novo pyrimidine nucleotide biosynthesis pathway. The protein is Aspartate carbamoyltransferase catalytic subunit of Methanococcus maripaludis (strain C5 / ATCC BAA-1333).